The following is a 442-amino-acid chain: Transposase InsG for insertion sequence element IS4 (442 aa).

The protein belongs to the transposase 11 family.

In terms of biological role, involved in the transposition of the insertion sequence IS4. The sequence is that of Transposase InsG for insertion sequence element IS4 (insG) from Escherichia coli (strain K12).